The primary structure comprises 197 residues: NADH-quinone oxidoreductase subunit I 2 (197 aa).

4Fe-4S ferredoxin-type domains are found at residues 42-71 (GVIG…IDSH) and 91-120 (DRFA…WSPE). Cysteine 51, cysteine 54, cysteine 57, cysteine 61, cysteine 100, cysteine 103, cysteine 106, and cysteine 110 together coordinate [4Fe-4S] cluster. The disordered stretch occupies residues 147–197 (APPALDPGAEEPKELAAARKAADKLAAQQQPDQPGPDHPGQPDESGQEGRT). Positions 156–169 (EEPKELAAARKAAD) are enriched in basic and acidic residues.

It belongs to the complex I 23 kDa subunit family. As to quaternary structure, NDH-1 is composed of 14 different subunits. Subunits NuoA, H, J, K, L, M, N constitute the membrane sector of the complex. [4Fe-4S] cluster serves as cofactor.

The protein resides in the cell membrane. The enzyme catalyses a quinone + NADH + 5 H(+)(in) = a quinol + NAD(+) + 4 H(+)(out). Functionally, NDH-1 shuttles electrons from NADH, via FMN and iron-sulfur (Fe-S) centers, to quinones in the respiratory chain. The immediate electron acceptor for the enzyme in this species is believed to be ubiquinone. Couples the redox reaction to proton translocation (for every two electrons transferred, four hydrogen ions are translocated across the cytoplasmic membrane), and thus conserves the redox energy in a proton gradient. The protein is NADH-quinone oxidoreductase subunit I 2 of Streptomyces coelicolor (strain ATCC BAA-471 / A3(2) / M145).